Reading from the N-terminus, the 341-residue chain is HTH-type transcriptional repressor PurR (341 aa).

Residues 2–56 (ATIKDVAKRAGVSTTTVSHVINKTRFVADETKAAVWEAIKELHYSPSAVARSLKV) enclose the HTH lacI-type domain. Positions 4-23 (IKDVAKRAGVSTTTVSHVIN) form a DNA-binding region, H-T-H motif. A DNA-binding region spans residues 48–56 (SAVARSLKV). Positions 73, 190, 192, 221, and 275 each coordinate hypoxanthine.

In terms of assembly, homodimer.

It participates in purine metabolism; purine nucleotide biosynthesis [regulation]. Is the main repressor of the genes involved in the de novo synthesis of purine nucleotides, regulating purB, purC, purEK, purF, purHD, purL, purMN and guaBA expression. PurR is allosterically activated to bind its cognate DNA by binding the purine corepressors, hypoxanthine or guanine, thereby effecting transcription repression. The sequence is that of HTH-type transcriptional repressor PurR from Edwardsiella ictaluri (strain 93-146).